The sequence spans 303 residues: Polyisoprenyl-teichoic acid--peptidoglycan teichoic acid transferase TagU (303 aa).

Residues 1-4 (MKKK) lie on the Cytoplasmic side of the membrane. The chain crosses the membrane as a helical; Signal-anchor for type II membrane protein span at residues 5 to 25 (ILFWVLGILGVLIIGGGIYAY). The Extracellular segment spans residues 26-303 (NVYSSVSNTL…KLRSHLEVTK (278 aa)).

This sequence belongs to the LytR/CpsA/Psr (LCP) family.

It is found in the cell membrane. It participates in cell wall biogenesis. May catalyze the final step in cell wall teichoic acid biosynthesis, the transfer of the anionic cell wall polymers (APs) from their lipid-linked precursor to the cell wall peptidoglycan (PG). In Bacillus cereus (strain AH820), this protein is Polyisoprenyl-teichoic acid--peptidoglycan teichoic acid transferase TagU.